The chain runs to 429 residues: UPF0242 protein CT_616 (429 aa).

Belongs to the UPF0242 family.

The protein is UPF0242 protein CT_616 of Chlamydia trachomatis serovar D (strain ATCC VR-885 / DSM 19411 / UW-3/Cx).